A 278-amino-acid polypeptide reads, in one-letter code: 4-deoxy-L-threo-5-hexosulose-uronate ketol-isomerase (278 aa).

Residues histidine 196, histidine 198, glutamate 203, and histidine 245 each contribute to the Zn(2+) site.

It belongs to the KduI family. Requires Zn(2+) as cofactor.

The catalysed reaction is 5-dehydro-4-deoxy-D-glucuronate = 3-deoxy-D-glycero-2,5-hexodiulosonate. Its pathway is glycan metabolism; pectin degradation; 2-dehydro-3-deoxy-D-gluconate from pectin: step 4/5. In terms of biological role, catalyzes the isomerization of 5-dehydro-4-deoxy-D-glucuronate to 3-deoxy-D-glycero-2,5-hexodiulosonate. The sequence is that of 4-deoxy-L-threo-5-hexosulose-uronate ketol-isomerase from Salmonella paratyphi A (strain ATCC 9150 / SARB42).